A 765-amino-acid chain; its full sequence is MQIRYFLALSLLPQLVLADESPTASASQCVIEPPVPRIVSQPGLSAADQEKIRIVSDRSNAEMGKQAIFTGDVVFSQGDRHIAADEAILDQATEQFDANGNLVFQDNIFTVTADSLQAQMRSNRATLKGAQYWLHGQQVHGDAEKLQITMNNNLILTNTNFTTCPPDNVSWLLEAEKIKINSEEEWGEIWNAKLRIADIPVFYIPYMTVPVSDKRKTGFLYPSFSTSTTNGFEVSAPYYWNIAPEYDLTFTPNYMSSRGLFTKTEFRYLAGEAQSGRLNLEYLGNDQMLSGSPNRYLYNWQHQGAIDKNWRVLANFTEVSDNNYFNDLKSDVNRATDNQLSRIGEVSYFERNWDISTRVQDIKVLGEDEKPYQVMPQVNFNYRAADFWNNLDFGFNSELTNFAHDDSDMNTATRLHMAPSLTLPIHGPSGSLTSQVKLMQTNYWQEQNNSAFDGLDDTVSRTIPQVRINGQINFERFTELFDQNYRQTLEPQFQYLYVGYEDQRGIGIYDTAQLQDDYFGLFRDRRFSGLDRIADANQVTLGVTTRFFDDHNQEATKFSLGQILYLQDSKLGYEDNLFEQNQSTSVLAAELDTRLSHDWYLGAAIQYDTNSSNNKKTEVTLDFRPEANKLLQLSYRYVPDLLNSNTNDLVNISQAGVRGAWPINDSLYFVGNWYYDLNESRSIETYTGFQYESCCYAIRLSYHYRIKTNYDDNIGSAVIDEREQFESGVYLNLVIKGLGGSGPLGVSDMLNDGLFNYRKPLYLRN.

The N-terminal stretch at 1 to 18 is a signal peptide; the sequence is MQIRYFLALSLLPQLVLA.

The protein belongs to the LptD family. In terms of assembly, component of the lipopolysaccharide transport and assembly complex. Interacts with LptE and LptA.

Its subcellular location is the cell outer membrane. Together with LptE, is involved in the assembly of lipopolysaccharide (LPS) at the surface of the outer membrane. This Shewanella sp. (strain MR-4) protein is LPS-assembly protein LptD.